The following is a 66-amino-acid chain: Large ribosomal subunit protein uL29 (66 aa).

The protein belongs to the universal ribosomal protein uL29 family.

This chain is Large ribosomal subunit protein uL29, found in Fervidobacterium nodosum (strain ATCC 35602 / DSM 5306 / Rt17-B1).